We begin with the raw amino-acid sequence, 357 residues long: MRPARALIDLQALRHNYRLAREATGARALAVIKADAYGHGAVRCAEALAAEADGFAVACIEEGLELREAGIRQPILLLEGFFEASELELIVAHDFWCVVHCAWQLEAIERASLARPLNVWLKMDSGMHRVGFFPEDFSAAHERLRASGKVAKIVMMSHFSRADELDCPRTEEQLAAFAAASQGLEGEISLRNSPAVLGWPKVPSDWVRPGILLYGATPFERAHPLADRLRPVMTLESKVISVRDLPAGEPVGYGARYSTERSQRIGVVAMGYADGYPRHAADGTLVFIDGKPGRLVGRVSMDMLTVDLTDHPQAGLGSRVELWGPNVPVGALAAQFGSIPYQLLCNLKRVPRVYSGA.

Lys33 serves as the catalytic Proton acceptor; specific for D-alanine. The residue at position 33 (Lys33) is an N6-(pyridoxal phosphate)lysine. Lys122 is modified (N6-carboxylysine). Arg129 contacts substrate. The Proton acceptor; specific for L-alanine role is filled by Tyr253. Met301 contacts substrate.

The protein belongs to the alanine racemase family. Homodimer. Requires pyridoxal 5'-phosphate as cofactor.

The enzyme catalyses L-alanine = D-alanine. Isomerizes L-alanine to D-alanine which is then oxidized to pyruvate by DadA. This Pseudomonas aeruginosa (strain ATCC 15692 / DSM 22644 / CIP 104116 / JCM 14847 / LMG 12228 / 1C / PRS 101 / PAO1) protein is Alanine racemase, catabolic.